Reading from the N-terminus, the 454-residue chain is Transmembrane protease serine 3 (454 aa).

At Met-1–Phe-48 the chain is on the cytoplasmic side. The helical; Signal-anchor for type II membrane protein transmembrane segment at Phe-49–Ile-69 threads the bilayer. The Extracellular portion of the chain corresponds to His-70 to Thr-454. Positions Asp-72–Val-108 constitute an LDL-receptor class A domain. Disulfide bonds link Cys-73-Cys-85, Cys-79-Cys-98, Cys-92-Cys-107, Cys-129-Cys-194, Cys-142-Cys-204, Cys-207-Cys-324, Cys-242-Cys-258, Cys-338-Cys-407, Cys-370-Cys-386, and Cys-397-Cys-425. An SRCR domain is found at Arg-109 to Thr-205. In terms of domain architecture, Peptidase S1 spans Ile-217 to Glu-449. A glycan (N-linked (GlcNAc...) asparagine) is linked at Asn-221. Residues His-257 and Asp-304 each act as charge relay system in the active site. Residue Ser-401 is the Charge relay system of the active site.

This sequence belongs to the peptidase S1 family. In terms of processing, undergoes autoproteolytic activation. In terms of tissue distribution, expressed in many tissues including fetal cochlea. Isoform T is found at increased levels in some carcinomas.

Its subcellular location is the endoplasmic reticulum membrane. Its function is as follows. Probable serine protease that plays a role in hearing. Acts as a permissive factor for cochlear hair cell survival and activation at the onset of hearing and is required for saccular hair cell survival. Activates ENaC (in vitro). The sequence is that of Transmembrane protease serine 3 (TMPRSS3) from Homo sapiens (Human).